A 584-amino-acid chain; its full sequence is Aspartate--tRNA(Asp/Asn) ligase (584 aa).

An L-aspartate-binding site is contributed by glutamate 177. The tract at residues 201 to 204 is aspartate; the sequence is QLFK. L-aspartate is bound at residue arginine 223. Residues 223-225 and glutamine 232 each bind ATP; that span reads RDE. Histidine 447 contributes to the L-aspartate binding site. Glutamate 481 serves as a coordination point for ATP. Residue arginine 488 participates in L-aspartate binding. 533-536 is an ATP binding site; that stretch reads GLDR.

Belongs to the class-II aminoacyl-tRNA synthetase family. Type 1 subfamily. In terms of assembly, homodimer.

It is found in the cytoplasm. It catalyses the reaction tRNA(Asx) + L-aspartate + ATP = L-aspartyl-tRNA(Asx) + AMP + diphosphate. Functionally, aspartyl-tRNA synthetase with relaxed tRNA specificity since it is able to aspartylate not only its cognate tRNA(Asp) but also tRNA(Asn). Reaction proceeds in two steps: L-aspartate is first activated by ATP to form Asp-AMP and then transferred to the acceptor end of tRNA(Asp/Asn). The sequence is that of Aspartate--tRNA(Asp/Asn) ligase from Chlamydia pneumoniae (Chlamydophila pneumoniae).